A 264-amino-acid chain; its full sequence is Thymidylate synthase (264 aa).

R21 serves as a coordination point for dUMP. H51 serves as a coordination point for (6R)-5,10-methylene-5,6,7,8-tetrahydrofolate. DUMP is bound at residue 126–127 (RR). Residue C146 is the Nucleophile of the active site. Residues 166 to 169 (RSAD), N177, and 207 to 209 (HLY) contribute to the dUMP site. D169 lines the (6R)-5,10-methylene-5,6,7,8-tetrahydrofolate pocket. A263 lines the (6R)-5,10-methylene-5,6,7,8-tetrahydrofolate pocket.

The protein belongs to the thymidylate synthase family. Bacterial-type ThyA subfamily. Homodimer.

The protein resides in the cytoplasm. It catalyses the reaction dUMP + (6R)-5,10-methylene-5,6,7,8-tetrahydrofolate = 7,8-dihydrofolate + dTMP. It functions in the pathway pyrimidine metabolism; dTTP biosynthesis. Functionally, catalyzes the reductive methylation of 2'-deoxyuridine-5'-monophosphate (dUMP) to 2'-deoxythymidine-5'-monophosphate (dTMP) while utilizing 5,10-methylenetetrahydrofolate (mTHF) as the methyl donor and reductant in the reaction, yielding dihydrofolate (DHF) as a by-product. This enzymatic reaction provides an intracellular de novo source of dTMP, an essential precursor for DNA biosynthesis. The chain is Thymidylate synthase from Dechloromonas aromatica (strain RCB).